The chain runs to 84 residues: Large ribosomal subunit protein bL31B-2 (84 aa).

Belongs to the bacterial ribosomal protein bL31 family. Type B subfamily. In terms of assembly, part of the 50S ribosomal subunit.

The chain is Large ribosomal subunit protein bL31B-2 from Streptomyces coelicolor (strain ATCC BAA-471 / A3(2) / M145).